Here is a 128-residue protein sequence, read N- to C-terminus: Small ribosomal subunit protein bS6 (128 aa).

Residues 105-128 are disordered; the sequence is AKVTEEEPVEAAPEAKVETTTEEE. Residues 117–128 are compositionally biased toward basic and acidic residues; it reads PEAKVETTTEEE.

It belongs to the bacterial ribosomal protein bS6 family.

In terms of biological role, binds together with bS18 to 16S ribosomal RNA. This is Small ribosomal subunit protein bS6 from Geotalea daltonii (strain DSM 22248 / JCM 15807 / FRC-32) (Geobacter daltonii).